Here is a 405-residue protein sequence, read N- to C-terminus: GTPase Obg (405 aa).

Residues 1–159 (MRFIDEAVVT…KVLKFELKVV (159 aa)) enclose the Obg domain. The 174-residue stretch at 160 to 333 (ADVGLIGLPN…IKYHLMNEIE (174 aa)) folds into the OBG-type G domain. GTP-binding positions include 166 to 173 (GLPNAGKS), 191 to 195 (FTTLV), 213 to 216 (DIPG), 283 to 286 (NKID), and 314 to 316 (ATL). Mg(2+) is bound by residues Ser173 and Thr193. Positions 371–382 (YRAARKAAREGT) are enriched in basic and acidic residues. The disordered stretch occupies residues 371–405 (YRAARKAAREGTDLSDDDFDDSDDDDDGVEVVYAP). Residues 383 to 399 (DLSDDDFDDSDDDDDGV) are compositionally biased toward acidic residues.

This sequence belongs to the TRAFAC class OBG-HflX-like GTPase superfamily. OBG GTPase family. In terms of assembly, monomer. Mg(2+) is required as a cofactor.

It localises to the cytoplasm. Its function is as follows. An essential GTPase which binds GTP, GDP and possibly (p)ppGpp with moderate affinity, with high nucleotide exchange rates and a fairly low GTP hydrolysis rate. Plays a role in control of the cell cycle, stress response, ribosome biogenesis and in those bacteria that undergo differentiation, in morphogenesis control. This Psychrobacter cryohalolentis (strain ATCC BAA-1226 / DSM 17306 / VKM B-2378 / K5) protein is GTPase Obg.